The primary structure comprises 121 residues: Large ribosomal subunit protein bL12 (121 aa).

It belongs to the bacterial ribosomal protein bL12 family. In terms of assembly, homodimer. Part of the ribosomal stalk of the 50S ribosomal subunit. Forms a multimeric L10(L12)X complex, where L10 forms an elongated spine to which 2 to 4 L12 dimers bind in a sequential fashion. Binds GTP-bound translation factors.

Its function is as follows. Forms part of the ribosomal stalk which helps the ribosome interact with GTP-bound translation factors. Is thus essential for accurate translation. The sequence is that of Large ribosomal subunit protein bL12 from Clostridium novyi (strain NT).